We begin with the raw amino-acid sequence, 40 residues long: Dolichyl-diphosphooligosaccharide--protein glycosyltransferase subunit 4 (40 aa).

At 1-4 the chain is on the lumenal side; the sequence is MITD. A helical transmembrane segment spans residues 5–25; sequence VQLAIFSNVLGVFLFLLVVAY. Residues 26 to 40 lie on the Cytoplasmic side of the membrane; it reads HYINANTGKSSPKAK.

It belongs to the OST4 family. In terms of assembly, component of the oligosaccharyltransferase (OST) complex.

The protein resides in the endoplasmic reticulum membrane. Functionally, subunit of the oligosaccharyl transferase (OST) complex that catalyzes the initial transfer of a defined glycan (Glc(3)Man(9)GlcNAc(2) in eukaryotes) from the lipid carrier dolichol-pyrophosphate to an asparagine residue within an Asn-X-Ser/Thr consensus motif in nascent polypeptide chains, the first step in protein N-glycosylation. N-glycosylation occurs cotranslationally and the complex associates with the Sec61 complex at the channel-forming translocon complex that mediates protein translocation across the endoplasmic reticulum (ER). All subunits are required for a maximal enzyme activity. This is Dolichyl-diphosphooligosaccharide--protein glycosyltransferase subunit 4 from Drosophila persimilis (Fruit fly).